Consider the following 370-residue polypeptide: Cytochrome b (370 aa).

4 helical membrane passes run 25–45 (FGSM…FLAV), 69–90 (WMMQ…YIHI), 105–125 (WFSG…GYVL), and 170–190 (FFAL…LHIL). Heme b contacts are provided by histidine 75 and histidine 89. Heme b contacts are provided by histidine 174 and histidine 188. Histidine 193 lines the a ubiquinone pocket. 4 helical membrane-spanning segments follow: residues 218 to 238 (YKDM…VSFF), 280 to 300 (LGGA…PFTH), 312 to 332 (FMQL…WTAT), and 339 to 358 (FTTI…ISNP).

It belongs to the cytochrome b family. As to quaternary structure, the cytochrome bc1 complex contains 3 respiratory subunits (MT-CYB, CYC1 and UQCRFS1), 2 core proteins (UQCRC1 and UQCRC2) and probably 6 low-molecular weight proteins. It depends on heme b as a cofactor.

It localises to the mitochondrion inner membrane. Its function is as follows. Component of the ubiquinol-cytochrome c reductase complex (complex III or cytochrome b-c1 complex) that is part of the mitochondrial respiratory chain. The b-c1 complex mediates electron transfer from ubiquinol to cytochrome c. Contributes to the generation of a proton gradient across the mitochondrial membrane that is then used for ATP synthesis. The sequence is that of Cytochrome b (MT-CYB) from Chilabothrus strigilatus mccraniei (Ragged Island boa constrictor).